The chain runs to 4118 residues: BEACH domain-containing protein lvsB (4118 aa).

Residues 1–35 (MNRNFNNINNNNNNNNNYHGYQYHQQQQQQNQQQQ) are disordered. A helical membrane pass occupies residues 198–218 (GIPLSFLNFLITILLRILSLP). The segment covering 236-257 (NFSGNNNNNFNNNNHYFNNNHN) has biased composition (low complexity). Disordered regions lie at residues 236-267 (NFSGNNNNNFNNNNHYFNNNHNNHNHHYQHHQ), 332-382 (PLSS…SKNN), and 621-644 (ISSSDNNNNNNNNSDGVNDDKNNN). A compositionally biased stretch (basic residues) spans 258-267 (NHNHHYQHHQ). 2 stretches are compositionally biased toward low complexity: residues 332–381 (PLSS…NSKN) and 621–636 (ISSSDNNNNNNNNSDG). The helical transmembrane segment at 827–847 (YLVLYMIVTEILSLLLELLVP) threads the bilayer. The segment covering 1155–1170 (NGGSISPSSIINNMNS) has biased composition (low complexity). Disordered regions lie at residues 1155–1213 (NGGS…FNNN), 1599–1622 (ANTTTNSTTASTTTTTTNSTTAVS), 1643–1681 (NSGISRENSLGGRDSIGSNSSSSSSSSNSGVSSGSSTNL), 1928–1968 (GNFL…ISSS), 2015–2044 (STNNNSNNSNNSNSNNNNNNNNTNYNSNSL), 2537–2574 (RRGSSSSSTNSTTNNNNNNSSTTTTSNNNNNNNENNNE), 2702–2741 (FSPSRSKEKEKEKEKEKEKEKEKEKERERERETTNVTSDS), 2754–2791 (DQSNEESSTTDSDSTSDNNNNNNRNSYSGRNIRGNGIN), 2902–3007 (NTNS…NSNE), 3245–3265 (PLIPDLSTPSTPPSPQNTKDQ), and 3348–3418 (KTTA…NIVK). 2 stretches are compositionally biased toward low complexity: residues 1657 to 1678 (SIGSNSSSSSSSSNSGVSSGSS) and 1935 to 1968 (SSSNNNLRERSINNNNNNNNNSNNNNNNNSISSS). The segment covering 2540–2571 (SSSSSTNSTTNNNNNNSSTTTTSNNNNNNNEN) has biased composition (low complexity). Positions 2705 to 2738 (SRSKEKEKEKEKEKEKEKEKEKERERERETTNVT) form a coiled coil. Positions 2706-2734 (RSKEKEKEKEKEKEKEKEKEKERERERET) are enriched in basic and acidic residues. Composition is skewed to low complexity over residues 2758–2791 (EESSTTDSDSTSDNNNNNNRNSYSGRNIRGNGIN) and 2902–2947 (NTNS…NSTN). Over residues 2948–2962 (QTITDTTLSPASSNV) the composition is skewed to polar residues. Composition is skewed to low complexity over residues 2963–2980 (SISNQSTPISNNNNNNNS) and 2988–3006 (SNINIPPTINISDSNSNSN). Residues 3303–3479 (KLGEKVNEVF…DRDIVYDLIM (177 aa)) form the BEACH-type PH domain. Over residues 3357-3411 (SNNNNNNNNNNNNNNNNNNNNSNDTTSSINSTTATNTNTTNTTTTNTTTTTTTTN) the composition is skewed to low complexity. The BEACH domain occupies 3491-3782 (AEVHGNILKM…QIFTKPHPKK (292 aa)). WD repeat units follow at residues 3868–3907 (VLNDDIICGDITKNGRLFVTGGTAGTVKVWKRCNNDGTIM), 3924–3963 (GHTNSILCVTVSQEYSIIVSGSKDSNCIIWDLNRLTYINS), 3984–4027 (TFET…LAKQ), 4029–4073 (FVND…KIRT), and 4075–4114 (VSKSTITALAVSKDNTQLISGDINGLIECLSSRSFDGYSS).

It is found in the membrane. The protein localises to the lysosome. It localises to the endosome. Involved in negative regulation of lysosome biogenesis, by limiting the heterotypic fusion of early endosomes and postlysosomal compartments. This is BEACH domain-containing protein lvsB (lvsB) from Dictyostelium discoideum (Social amoeba).